The sequence spans 307 residues: 4-hydroxy-3-methylbut-2-enyl diphosphate reductase (307 aa).

Cys-13 lines the [4Fe-4S] cluster pocket. 2 residues coordinate (2E)-4-hydroxy-3-methylbut-2-enyl diphosphate: His-42 and His-75. Dimethylallyl diphosphate contacts are provided by His-42 and His-75. His-42 and His-75 together coordinate isopentenyl diphosphate. Cys-97 serves as a coordination point for [4Fe-4S] cluster. Position 125 (His-125) interacts with (2E)-4-hydroxy-3-methylbut-2-enyl diphosphate. Position 125 (His-125) interacts with dimethylallyl diphosphate. His-125 contacts isopentenyl diphosphate. Glu-127 functions as the Proton donor in the catalytic mechanism. Thr-165 lines the (2E)-4-hydroxy-3-methylbut-2-enyl diphosphate pocket. Residue Cys-195 coordinates [4Fe-4S] cluster. 4 residues coordinate (2E)-4-hydroxy-3-methylbut-2-enyl diphosphate: Ser-223, Ser-224, Asn-225, and Ser-267. Dimethylallyl diphosphate-binding residues include Ser-223, Ser-224, Asn-225, and Ser-267. Ser-223, Ser-224, Asn-225, and Ser-267 together coordinate isopentenyl diphosphate.

This sequence belongs to the IspH family. It depends on [4Fe-4S] cluster as a cofactor.

It carries out the reaction isopentenyl diphosphate + 2 oxidized [2Fe-2S]-[ferredoxin] + H2O = (2E)-4-hydroxy-3-methylbut-2-enyl diphosphate + 2 reduced [2Fe-2S]-[ferredoxin] + 2 H(+). The catalysed reaction is dimethylallyl diphosphate + 2 oxidized [2Fe-2S]-[ferredoxin] + H2O = (2E)-4-hydroxy-3-methylbut-2-enyl diphosphate + 2 reduced [2Fe-2S]-[ferredoxin] + 2 H(+). Its pathway is isoprenoid biosynthesis; dimethylallyl diphosphate biosynthesis; dimethylallyl diphosphate from (2E)-4-hydroxy-3-methylbutenyl diphosphate: step 1/1. The protein operates within isoprenoid biosynthesis; isopentenyl diphosphate biosynthesis via DXP pathway; isopentenyl diphosphate from 1-deoxy-D-xylulose 5-phosphate: step 6/6. In terms of biological role, catalyzes the conversion of 1-hydroxy-2-methyl-2-(E)-butenyl 4-diphosphate (HMBPP) into a mixture of isopentenyl diphosphate (IPP) and dimethylallyl diphosphate (DMAPP). Acts in the terminal step of the DOXP/MEP pathway for isoprenoid precursor biosynthesis. In Chlamydia trachomatis serovar L2 (strain ATCC VR-902B / DSM 19102 / 434/Bu), this protein is 4-hydroxy-3-methylbut-2-enyl diphosphate reductase.